A 443-amino-acid chain; its full sequence is C4-dicarboxylate transport protein (443 aa).

9 helical membrane passes run 17–37 (PFYSHLYVQVLAAIAAGILLG), 57–77 (LVKMIIAPVIFLTVATGIAGM), 92–112 (LYFLTFSTLALVIGMVVANVV), 139–159 (EQSIVGFLTNIIPTTIVGAFA), 161–181 (GDILQVLFFSVLFGIALAMVG), 201–221 (LVAILMKAAPIGAFGAMAFTI), 234–254 (MLIGTFYLTSLLFVLVVLGAV), 320–340 (IYMTLAALFIAQATGINLSWG), and 368–388 (AATLSVVPSVPVAGMALILGI).

This sequence belongs to the dicarboxylate/amino acid:cation symporter (DAACS) (TC 2.A.23) family.

The protein resides in the cell inner membrane. Its function is as follows. Responsible for the transport of dicarboxylates such as succinate, fumarate, and malate from the periplasm across the membrane. The protein is C4-dicarboxylate transport protein of Rhizobium leguminosarum bv. trifolii (strain WSM2304).